A 269-amino-acid chain; its full sequence is Indole-3-glycerol phosphate synthase (269 aa).

It belongs to the TrpC family.

It catalyses the reaction 1-(2-carboxyphenylamino)-1-deoxy-D-ribulose 5-phosphate + H(+) = (1S,2R)-1-C-(indol-3-yl)glycerol 3-phosphate + CO2 + H2O. The protein operates within amino-acid biosynthesis; L-tryptophan biosynthesis; L-tryptophan from chorismate: step 4/5. This Rhodococcus jostii (strain RHA1) protein is Indole-3-glycerol phosphate synthase.